We begin with the raw amino-acid sequence, 285 residues long: 4-diphosphocytidyl-2-C-methyl-D-erythritol kinase (285 aa).

Lysine 9 is an active-site residue. ATP is bound at residue proline 89–serine 99. Aspartate 131 is a catalytic residue.

It belongs to the GHMP kinase family. IspE subfamily.

It catalyses the reaction 4-CDP-2-C-methyl-D-erythritol + ATP = 4-CDP-2-C-methyl-D-erythritol 2-phosphate + ADP + H(+). The protein operates within isoprenoid biosynthesis; isopentenyl diphosphate biosynthesis via DXP pathway; isopentenyl diphosphate from 1-deoxy-D-xylulose 5-phosphate: step 3/6. In terms of biological role, catalyzes the phosphorylation of the position 2 hydroxy group of 4-diphosphocytidyl-2C-methyl-D-erythritol. In Thermodesulfovibrio yellowstonii (strain ATCC 51303 / DSM 11347 / YP87), this protein is 4-diphosphocytidyl-2-C-methyl-D-erythritol kinase.